The primary structure comprises 107 residues: Antimicrobial peptide microplusin (107 aa).

Positions 1-19 (MKSLLVCLVLAVVVLVASG) are cleaved as a signal peptide. Intrachain disulfides connect Cys25-Cys60, Cys38-Cys88, and Cys49-Cys54. Positions 86-107 (TDCDHSHGHEHSHGHEHGHGHH) are disordered. Basic and acidic residues predominate over residues 87–107 (DCDHSHGHEHSHGHEHGHGHH).

It localises to the secreted. Has bacteriostatic activity against Gram-positive bacteria, but not against Gram-negative bacteria. Has fungistatic activity against some but not all fungi. Binds and sequesters copper and iron ions. Copper-chelating is crucial for antimicrobial activity against M.luteus. In Ixodes scapularis (Black-legged tick), this protein is Antimicrobial peptide microplusin.